The following is a 147-amino-acid chain: Ubiquitin-conjugating enzyme E2 D2 (147 aa).

The UBC core domain occupies M1–M147. Residue C85 is the Glycyl thioester intermediate of the active site.

The protein belongs to the ubiquitin-conjugating enzyme family. In terms of assembly, interacts with SCF (SKP1-CUL1-F-box protein) E3 ubiquitin ligase complex. Interacts with CNOT4 (via RING domain). Interacts with E3 ubiquitin-protein ligases CBLC, PJA1 and PJA2. Interacts with PDZRN3. Interacts with PPP1R11. Interacts with E3 ubiquitin-protein ligase PHF7; the interaction inhibits cleavage of PHF7 and promotes association of the complex with the nucleosome core particle.

The catalysed reaction is S-ubiquitinyl-[E1 ubiquitin-activating enzyme]-L-cysteine + [E2 ubiquitin-conjugating enzyme]-L-cysteine = [E1 ubiquitin-activating enzyme]-L-cysteine + S-ubiquitinyl-[E2 ubiquitin-conjugating enzyme]-L-cysteine.. It carries out the reaction S-ubiquitinyl-[E1 ubiquitin-activating enzyme]-L-cysteine + [acceptor protein]-L-lysine = [E1 ubiquitin-activating enzyme]-L-cysteine + N(6)-monoubiquitinyl-[acceptor protein]-L-lysine.. It participates in protein modification; protein ubiquitination. Functionally, accepts ubiquitin from the E1 complex and catalyzes its covalent attachment to other proteins. In vitro catalyzes 'Lys-48'-linked polyubiquitination. Mediates the selective degradation of short-lived and abnormal proteins. Functions in the E6/E6-AP-induced ubiquitination of p53/TP53. Mediates ubiquitination of PEX5 and SQSTM1 and autoubiquitination of STUB1 and TRAF6. Involved in the signal-induced conjugation and subsequent degradation of NFKBIA, FBXW2-mediated GCM1 ubiquitination and degradation, MDM2-dependent degradation of p53/TP53 and the activation of MAVS in the mitochondria by RIGI in response to viral infection. Essential for viral activation of IRF3. In Bos taurus (Bovine), this protein is Ubiquitin-conjugating enzyme E2 D2 (UBE2D2).